The chain runs to 169 residues: Peptidyl-prolyl cis-trans isomerase (169 aa).

The PPIase cyclophilin-type domain maps to 5–168; that stretch reads FFDMTIGGQP…SEVKIAKCGQ (164 aa).

This sequence belongs to the cyclophilin-type PPIase family.

Its subcellular location is the cytoplasm. The enzyme catalyses [protein]-peptidylproline (omega=180) = [protein]-peptidylproline (omega=0). Binds cyclosporin A (CsA). CsA mediates some of its effects via an inhibitory action on PPIase. In terms of biological role, PPIases accelerate the folding of proteins. It catalyzes the cis-trans isomerization of proline imidic peptide bonds in oligopeptides. This Unspecified eudicot DB-1992 protein is Peptidyl-prolyl cis-trans isomerase.